The following is a 187-amino-acid chain: Small ribosomal subunit protein uS7 (187 aa).

Belongs to the universal ribosomal protein uS7 family. As to quaternary structure, part of the 30S ribosomal subunit.

In terms of biological role, one of the primary rRNA binding proteins, it binds directly to 16S rRNA where it nucleates assembly of the head domain of the 30S subunit. Is located at the subunit interface close to the decoding center. The polypeptide is Small ribosomal subunit protein uS7 (Picrophilus torridus (strain ATCC 700027 / DSM 9790 / JCM 10055 / NBRC 100828 / KAW 2/3)).